The chain runs to 84 residues: Large ribosomal subunit protein bL27 (84 aa).

The disordered stretch occupies residues 1-20 (MAHKKGGGSTKNGRDSNPKY).

Belongs to the bacterial ribosomal protein bL27 family.

This chain is Large ribosomal subunit protein bL27, found in Chlorobaculum tepidum (strain ATCC 49652 / DSM 12025 / NBRC 103806 / TLS) (Chlorobium tepidum).